Here is a 308-residue protein sequence, read N- to C-terminus: 1D-myo-inositol 2-acetamido-2-deoxy-alpha-D-glucopyranoside deacetylase (308 aa).

The Zn(2+) site is built by histidine 37, aspartate 40, and histidine 171.

The protein belongs to the MshB deacetylase family. Zn(2+) is required as a cofactor.

It catalyses the reaction 1D-myo-inositol 2-acetamido-2-deoxy-alpha-D-glucopyranoside + H2O = 1D-myo-inositol 2-amino-2-deoxy-alpha-D-glucopyranoside + acetate. Catalyzes the deacetylation of 1D-myo-inositol 2-acetamido-2-deoxy-alpha-D-glucopyranoside (GlcNAc-Ins) in the mycothiol biosynthesis pathway. The sequence is that of 1D-myo-inositol 2-acetamido-2-deoxy-alpha-D-glucopyranoside deacetylase from Mycobacterium sp. (strain KMS).